Reading from the N-terminus, the 192-residue chain is Imidazoleglycerol-phosphate dehydratase (192 aa).

The protein belongs to the imidazoleglycerol-phosphate dehydratase family.

It localises to the cytoplasm. It catalyses the reaction D-erythro-1-(imidazol-4-yl)glycerol 3-phosphate = 3-(imidazol-4-yl)-2-oxopropyl phosphate + H2O. Its pathway is amino-acid biosynthesis; L-histidine biosynthesis; L-histidine from 5-phospho-alpha-D-ribose 1-diphosphate: step 6/9. The chain is Imidazoleglycerol-phosphate dehydratase from Vesicomyosocius okutanii subsp. Calyptogena okutanii (strain HA).